Here is a 292-residue protein sequence, read N- to C-terminus: UDP-N-acetylenolpyruvoylglucosamine reductase (292 aa).

One can recognise an FAD-binding PCMH-type domain in the interval 27 to 188 (KIGGPVRLFI…LRVGFRIIKG (162 aa)). The active site involves Arg166. Ser217 serves as the catalytic Proton donor. The active site involves Glu288.

It belongs to the MurB family. The cofactor is FAD.

Its subcellular location is the cytoplasm. The catalysed reaction is UDP-N-acetyl-alpha-D-muramate + NADP(+) = UDP-N-acetyl-3-O-(1-carboxyvinyl)-alpha-D-glucosamine + NADPH + H(+). It functions in the pathway cell wall biogenesis; peptidoglycan biosynthesis. Functionally, cell wall formation. The sequence is that of UDP-N-acetylenolpyruvoylglucosamine reductase from Thermosipho melanesiensis (strain DSM 12029 / CIP 104789 / BI429).